We begin with the raw amino-acid sequence, 310 residues long: MYEIKQPFHSGYLQVSEIHQIYWEESGNPDGVPVIFLHGGPGAGASPECRGFFNPDVFRIVIIDQRGCGRSHPYACAEDNTTWDLVADIEKVREMLGIGKWLVFGGSWGSTLSLAYAQTHPERVKGLVLRGIFLCRPSETAWLNEAGGVSRIYPEQWQKFVAPIAENRRNRLIEAYHGLLFHQDEEVCLSAAKAWADWESYLIRFEPEGVDEDAYASLAIARLENHYFVNGGWLQGDKAILNNIGKIRHIPTVIVQGRYDLCTPMQSAWELSKAFPEAELRVVQAGHCAFDPPLADALVQAVEDILPRLL.

The region spanning 33–290 (PVIFLHGGPG…RVVQAGHCAF (258 aa)) is the AB hydrolase-1 domain. Serine 107 functions as the Nucleophile in the catalytic mechanism. Aspartate 260 is an active-site residue. Residue histidine 287 is the Proton donor of the active site.

Belongs to the peptidase S33 family.

Its subcellular location is the cytoplasm. It carries out the reaction Release of N-terminal proline from a peptide.. In terms of biological role, hydrolyzes peptides having the structure Pro-Y-Z to yield free proline. Also hydrolyzes the dipeptide Pro-Gly. In Neisseria gonorrhoeae, this protein is Proline iminopeptidase (pip).